Reading from the N-terminus, the 350-residue chain is MTKITNDLFLRAARKEQVDKIPVWYMRQAGRSQPEYRKLKEKYSLFEITHQPEICAYVTKLPVDQYGVDAAILYKDIMTPLPGMGIDVEIKSGIGPVIHNPIRTFQDVDKLSIFKPEIEVPYVLDTIKLLADDMLEVPLIGFAGAPFTLASYMIEGGPSKNYHLTKSFMYREPEVWSILMEKLGRMTATYLIAQINAGASAVQLFDSWVGALSRADYTKYIRPVIEMIVREVKAVHPTTPIIMQAVGASHLLEEWETMPLDVVGVDWRETLTGARKKVPSKAIQGNLDPSTLLAPEKCLEEAERIIQEGILKPGYIFNLGHGVFPEVQPEMLKKLTNYIHDRSEILLKKG.

Substrate-binding positions include 27-31, phenylalanine 46, aspartate 76, tyrosine 152, serine 207, and histidine 321; that span reads RQAGR.

It belongs to the uroporphyrinogen decarboxylase family. As to quaternary structure, homodimer.

The protein localises to the cytoplasm. It carries out the reaction uroporphyrinogen III + 4 H(+) = coproporphyrinogen III + 4 CO2. It participates in porphyrin-containing compound metabolism; protoporphyrin-IX biosynthesis; coproporphyrinogen-III from 5-aminolevulinate: step 4/4. In terms of biological role, catalyzes the decarboxylation of four acetate groups of uroporphyrinogen-III to yield coproporphyrinogen-III. This chain is Uroporphyrinogen decarboxylase, found in Listeria welshimeri serovar 6b (strain ATCC 35897 / DSM 20650 / CCUG 15529 / CIP 8149 / NCTC 11857 / SLCC 5334 / V8).